The primary structure comprises 173 residues: Shikimate kinase (173 aa).

ATP is bound at residue 14–19 (GAGKST). Serine 18 provides a ligand contact to Mg(2+). Residues aspartate 36, arginine 60, and glycine 82 each contribute to the substrate site. Residue arginine 120 participates in ATP binding. Substrate is bound at residue arginine 140. Glutamine 157 contributes to the ATP binding site.

The protein belongs to the shikimate kinase family. In terms of assembly, monomer. It depends on Mg(2+) as a cofactor.

It is found in the cytoplasm. The catalysed reaction is shikimate + ATP = 3-phosphoshikimate + ADP + H(+). It functions in the pathway metabolic intermediate biosynthesis; chorismate biosynthesis; chorismate from D-erythrose 4-phosphate and phosphoenolpyruvate: step 5/7. Catalyzes the specific phosphorylation of the 3-hydroxyl group of shikimic acid using ATP as a cosubstrate. This Baumannia cicadellinicola subsp. Homalodisca coagulata protein is Shikimate kinase.